Here is a 214-residue protein sequence, read N- to C-terminus: Adenylate kinase (214 aa).

10–15 (GAGKGT) provides a ligand contact to ATP. The NMP stretch occupies residues 30 to 59 (STGDMLRAAVKAGSELGKQAKAIMDAGKLV). AMP-binding positions include threonine 31, arginine 36, 57–59 (KLV), 85–88 (GFPR), and glutamine 92. The segment at 122–159 (GRRVHPGSGRVYHVKFNPPQVEGKDDVTGEDLMTRKDD) is LID. ATP-binding positions include arginine 123 and 132-133 (VY). Residues arginine 156 and arginine 167 each contribute to the AMP site. Glutamine 200 contributes to the ATP binding site.

Belongs to the adenylate kinase family. As to quaternary structure, monomer.

It localises to the cytoplasm. The catalysed reaction is AMP + ATP = 2 ADP. The protein operates within purine metabolism; AMP biosynthesis via salvage pathway; AMP from ADP: step 1/1. In terms of biological role, catalyzes the reversible transfer of the terminal phosphate group between ATP and AMP. Plays an important role in cellular energy homeostasis and in adenine nucleotide metabolism. The chain is Adenylate kinase from Edwardsiella ictaluri (strain 93-146).